A 278-amino-acid chain; its full sequence is Tryptophan synthase alpha chain (278 aa).

Active-site proton acceptor residues include Glu-50 and Asp-61.

This sequence belongs to the TrpA family. As to quaternary structure, tetramer of two alpha and two beta chains.

The catalysed reaction is (1S,2R)-1-C-(indol-3-yl)glycerol 3-phosphate + L-serine = D-glyceraldehyde 3-phosphate + L-tryptophan + H2O. It functions in the pathway amino-acid biosynthesis; L-tryptophan biosynthesis; L-tryptophan from chorismate: step 5/5. In terms of biological role, the alpha subunit is responsible for the aldol cleavage of indoleglycerol phosphate to indole and glyceraldehyde 3-phosphate. In Rhodopseudomonas palustris (strain TIE-1), this protein is Tryptophan synthase alpha chain.